An 85-amino-acid polypeptide reads, in one-letter code: Cell division topological specificity factor (85 aa).

This sequence belongs to the MinE family.

In terms of biological role, prevents the cell division inhibition by proteins MinC and MinD at internal division sites while permitting inhibition at polar sites. This ensures cell division at the proper site by restricting the formation of a division septum at the midpoint of the long axis of the cell. In Shewanella sp. (strain ANA-3), this protein is Cell division topological specificity factor.